A 275-amino-acid polypeptide reads, in one-letter code: Leucine-rich repeat-containing protein 3C (275 aa).

Positions 1 to 41 (MRMTSSSFVSYCTPGLCQFMAMLPTAGHLLPLLLVIGTGGT) are cleaved as a signal peptide. Positions 42–79 (VPSPQVPPRGCYVAKEAGERTFRCSQAGLSAVPSGIPN) constitute an LRRNT domain. LRR repeat units lie at residues 80-101 (DTRK…AFQH), 104-125 (VLEE…AFQG), and 129-150 (TLRH…AFVG). Asn-156 carries N-linked (GlcNAc...) asparagine glycosylation. The 53-residue stretch at 160-212 (NPWHCDCALQEVLRQVRLVPGTGTGIVCGSGARPDLVGQEFLLLAGEEELCGS) folds into the LRRCT domain. The chain crosses the membrane as a helical span at residues 225 to 245 (LLVTMGGWLTLMVAYLVHYVW).

It belongs to the LRRC3 family.

Its subcellular location is the membrane. The chain is Leucine-rich repeat-containing protein 3C (LRRC3C) from Homo sapiens (Human).